The sequence spans 251 residues: Small ribosomal subunit protein uS2 (251 aa).

Belongs to the universal ribosomal protein uS2 family.

In Synechococcus elongatus (strain ATCC 33912 / PCC 7942 / FACHB-805) (Anacystis nidulans R2), this protein is Small ribosomal subunit protein uS2.